We begin with the raw amino-acid sequence, 243 residues long: Probable transcriptional regulatory protein BPP2422 (243 aa).

Positions 1-21 are disordered; that stretch reads MAGHSKWANIQHRKGRQDAKR.

It belongs to the TACO1 family.

The protein resides in the cytoplasm. The protein is Probable transcriptional regulatory protein BPP2422 of Bordetella parapertussis (strain 12822 / ATCC BAA-587 / NCTC 13253).